A 309-amino-acid chain; its full sequence is Homoserine O-succinyltransferase (309 aa).

The Acyl-thioester intermediate role is filled by Cys142. Residues Lys163 and Ser192 each coordinate substrate. The active-site Proton acceptor is His235. Glu237 is an active-site residue. Arg249 contributes to the substrate binding site.

It belongs to the MetA family.

It is found in the cytoplasm. It carries out the reaction L-homoserine + succinyl-CoA = O-succinyl-L-homoserine + CoA. It participates in amino-acid biosynthesis; L-methionine biosynthesis via de novo pathway; O-succinyl-L-homoserine from L-homoserine: step 1/1. Its function is as follows. Transfers a succinyl group from succinyl-CoA to L-homoserine, forming succinyl-L-homoserine. The sequence is that of Homoserine O-succinyltransferase from Cronobacter sakazakii (strain ATCC BAA-894) (Enterobacter sakazakii).